A 327-amino-acid polypeptide reads, in one-letter code: MATVTEMPTDVVVVDDVKEVSTKSEKIIDEGIEKSSITDSKTETESRLDMHKLVAMFKKLNPLAKEFFPSYYDPKKNNQVAKANQFLPADDFETTKKQSGEEFDLDAKKDDNTRKRRNYSQGRRRLTGRISKAQREDSIRRTVYVSDIDQSVTEEGLAGLFSNCGQVVDCRICGDPHSVLRFAFVEFADDQGAHEALSLGGTMLGFYPVRVLPSKTAILPVNPTFLPRSEDEREMCTRTIYCTNIDKKVSQADVRNFFESACGEVTRLRLLGDQLHSTRIAFVEFALADSALSALNCSGMVVGSQPIRVSPSKTPVRPRITRPPSTN.

The PAM2-like motif lies at 59–69 (KLNPLAKEFFP). Residues 97 to 113 (KQSGEEFDLDAKKDDNT) are compositionally biased toward basic and acidic residues. The tract at residues 97–132 (KQSGEEFDLDAKKDDNTRKRRNYSQGRRRLTGRISK) is disordered. The short motif at 114 to 125 (RKRRNYSQGRRR) is the Bipartite nuclear localization signal element. A compositionally biased stretch (basic residues) spans 114-127 (RKRRNYSQGRRRLT). 2 RRM domains span residues 141–216 (RTVY…PSKT) and 238–314 (RTIY…PSKT). The segment at 308–327 (RVSPSKTPVRPRITRPPSTN) is disordered.

Its subcellular location is the nucleus. The chain is Polyadenylate-binding protein-interacting protein 9 (CID9) from Arabidopsis thaliana (Mouse-ear cress).